The chain runs to 443 residues: Glucose-6-phosphate isomerase (443 aa).

Glutamate 285 functions as the Proton donor in the catalytic mechanism. Catalysis depends on residues histidine 306 and lysine 420.

It belongs to the GPI family.

Its subcellular location is the cytoplasm. It catalyses the reaction alpha-D-glucose 6-phosphate = beta-D-fructose 6-phosphate. Its pathway is carbohydrate biosynthesis; gluconeogenesis. It participates in carbohydrate degradation; glycolysis; D-glyceraldehyde 3-phosphate and glycerone phosphate from D-glucose: step 2/4. In terms of biological role, catalyzes the reversible isomerization of glucose-6-phosphate to fructose-6-phosphate. This Staphylococcus aureus (strain NCTC 8325 / PS 47) protein is Glucose-6-phosphate isomerase.